A 372-amino-acid polypeptide reads, in one-letter code: Inner membrane protein YbiR (372 aa).

Residues 1 to 13 (MSLPFLRTLQGDR) are Periplasmic-facing. 2 consecutive transmembrane segments (helical) span residues 14–34 (FFQL…FAPK) and 35–55 (SWPA…MLLT). The Periplasmic portion of the chain corresponds to 56 to 85 (KGVELSGYFDVLGRKMVRRFATERRLAMFM). Residues 86–106 (VLAAALLSTFLTNDVALFIVV) form a helical membrane-spanning segment. Residues 107–122 (PLTITLKRLCEIPVNR) lie on the Cytoplasmic side of the membrane. Residues 123–143 (LIIFEALAVNAGSLLTPIGNP) form a helical membrane-spanning segment. Residues 144–155 (QNILIWGRSGLS) lie on the Periplasmic side of the membrane. Residues 156-176 (FAGFIAQMAPLAGAMMLTLLL) form a helical membrane-spanning segment. Topologically, residues 177 to 208 (LCWCCFPGKAMQYHTGVQTPEWKPRLVWSCLG) are cytoplasmic. The chain crosses the membrane as a helical span at residues 209–229 (LYIVFLTALEFKQELWGLVIV). Residues 230 to 247 (AAGFALLARRVVLSVDWT) are Periplasmic-facing. Residues 248–268 (LLLVFMAMFIDVHLLTQLPAL) traverse the membrane as a helical segment. Over 269 to 283 (QGVLGNVSHLSEPGL) the chain is Cytoplasmic. A helical membrane pass occupies residues 284 to 304 (WLTAIGLSQVISNVPSTILLL). The Periplasmic portion of the chain corresponds to 305 to 309 (NYVPP). The chain crosses the membrane as a helical span at residues 310 to 330 (SLLLVWAVNVGGFGLLPGSLA). Residues 331–348 (NLIALRMANDRRIWWRFH) are Cytoplasmic-facing. A helical transmembrane segment spans residues 349–369 (LYSIPMLLWAALVGYVLLVIL). Over 370 to 372 (PAN) the chain is Periplasmic.

The protein belongs to the CitM (TC 2.A.11) transporter family.

The protein resides in the cell inner membrane. The polypeptide is Inner membrane protein YbiR (ybiR) (Escherichia coli (strain K12)).